Reading from the N-terminus, the 166-residue chain is Protein-export protein SecB (166 aa).

This sequence belongs to the SecB family. As to quaternary structure, homotetramer, a dimer of dimers. One homotetramer interacts with 1 SecA dimer.

It localises to the cytoplasm. Its function is as follows. One of the proteins required for the normal export of preproteins out of the cell cytoplasm. It is a molecular chaperone that binds to a subset of precursor proteins, maintaining them in a translocation-competent state. It also specifically binds to its receptor SecA. The chain is Protein-export protein SecB from Sinorhizobium fredii (strain NBRC 101917 / NGR234).